The following is a 1325-amino-acid chain: Bile salt export pump (1325 aa).

The Cytoplasmic portion of the chain corresponds to M1–M62. The region spanning M62 to T385 is the ABC transmembrane type-1 1 domain. Residues F63–F83 traverse the membrane as a helical segment. At G84–G147 the chain is on the extracellular side. Residues N109, N116, N122, and N125 are each glycosylated (N-linked (GlcNAc...) asparagine). Residues I148–A168 form a helical membrane-spanning segment. Over R169 to K240 the chain is Cytoplasmic. Residues L241–L261 traverse the membrane as a helical segment. Topologically, residues S262–G319 are extracellular. A helical transmembrane segment spans residues I320 to A340. At F341–E353 the chain is on the cytoplasmic side. A helical membrane pass occupies residues Y354–G374. N375, N424, and N440 each carry an N-linked (GlcNAc...) asparagine glycan. The Extracellular segment spans residues N375–M759. Residues I420–L656 enclose the ABC transporter 1 domain. G455–S462 provides a ligand contact to ATP. An N-linked (GlcNAc...) asparagine glycan is attached at N591. An ABC transmembrane type-1 2 domain is found at M759 to K1047. The helical transmembrane segment at L760 to F780 threads the bilayer. At S781–Q798 the chain is on the cytoplasmic side. The helical transmembrane segment at I799–L819 threads the bilayer. Residues Q820 to M894 lie on the Extracellular side of the membrane. An N-linked (GlcNAc...) asparagine glycan is attached at N889. The chain crosses the membrane as a helical span at residues I895 to L915. Topologically, residues A916–N983 are cytoplasmic. A helical membrane pass occupies residues V984–Y1004. The Extracellular portion of the chain corresponds to R1005–E1014. A helical membrane pass occupies residues G1015 to L1035. Residues G1036–S1325 lie on the Cytoplasmic side of the membrane. The ABC transporter 2 domain maps to V1082–T1320. Residue G1117–S1124 coordinates ATP.

Belongs to the ABC transporter superfamily. ABCB family. Multidrug resistance exporter (TC 3.A.1.201) subfamily. In terms of assembly, interacts with HAX1. Interacts with the adapter protein complex 2 (AP-2) throught AP2A2 or AP2A1; this interaction regulates cell membrane expression of ABCB11 through its internalization in a clathrin-dependent manner and its subsequent degradation. N-glycosylated. Post-translationally, ubiquitinated; short-chain ubiquitination regulates cell-Surface expression of ABCB11. As to expression, liver.

Its subcellular location is the apical cell membrane. The protein resides in the recycling endosome membrane. The protein localises to the endosome. It localises to the cell membrane. The enzyme catalyses cholate(in) + ATP + H2O = cholate(out) + ADP + phosphate + H(+). The catalysed reaction is taurocholate(in) + ATP + H2O = taurocholate(out) + ADP + phosphate + H(+). It carries out the reaction glycocholate(in) + ATP + H2O = glycocholate(out) + ADP + phosphate + H(+). It catalyses the reaction glycochenodeoxycholate(in) + ATP + H2O = glycochenodeoxycholate(out) + ADP + phosphate + H(+). The enzyme catalyses taurochenodeoxycholate(in) + ATP + H2O = taurochenodeoxycholate(out) + ADP + phosphate + H(+). The catalysed reaction is glycoursodeoxycholate(in) + ATP + H2O = glycoursodeoxycholate(out) + ADP + phosphate + H(+). It carries out the reaction tauroursodeoxycholate(in) + ATP + H2O = tauroursodeoxycholate(out) + ADP + phosphate + H(+). It catalyses the reaction taurodeoxycholate(in) + ATP + H2O = taurodeoxycholate(out) + ADP + phosphate + H(+). The enzyme catalyses taurolithocholate 3-sulfate(in) + ATP + H2O = taurolithocholate 3-sulfate(out) + ADP + phosphate + H(+). The catalysed reaction is pravastatin(in) + ATP + H2O = pravastatin(out) + ADP + phosphate + H(+). Its activity is regulated as follows. The uptake of taurocholate is inhibited by taurolithocholate sulfate with an IC(50) of 9 uM. Pravastatin competitively inhibits the transport of taurocholic acid. Cyclosporin A, glibenclamide, rifampicin and troglitazonestrongly competitively inhibit the transport activity of taurocholate. The canalicular transport activity of taurocholate is strongly dependent on canalicular membrane cholesterol content. The uptake of taurocholate is increased by short- and medium-chain fatty acids. Cholesterol increases transport capacity of taurocholate without affecting the affinity for the substrate. Its function is as follows. Catalyzes the transport of the major hydrophobic bile salts, such as taurine and glycine-conjugated cholic acid across the canalicular membrane of hepatocytes in an ATP-dependent manner, therefore participates in hepatic bile acid homeostasis and consequently to lipid homeostasis through regulation of biliary lipid secretion in a bile salts dependent manner. Transports taurine-conjugated bile salts more rapidly than glycine-conjugated bile salts. Also transports non-bile acid compounds, such as pravastatin and fexofenadine in an ATP-dependent manner and may be involved in their biliary excretion. This is Bile salt export pump from Canis lupus familiaris (Dog).